The primary structure comprises 98 residues: Nucleoid-associated protein pc0477 (98 aa).

Belongs to the YbaB/EbfC family. As to quaternary structure, homodimer.

It is found in the cytoplasm. The protein localises to the nucleoid. Binds to DNA and alters its conformation. May be involved in regulation of gene expression, nucleoid organization and DNA protection. The protein is Nucleoid-associated protein pc0477 of Protochlamydia amoebophila (strain UWE25).